A 136-amino-acid polypeptide reads, in one-letter code: Acyl carrier protein 2, chloroplastic (136 aa).

A chloroplast-targeting transit peptide spans 1 to 51 (MASIAASASISLQARPRQLAIAASQVKSFSNGRRSSLSFNLRQLPTRLTVS). The Carrier domain maps to 56 to 131 (PETVDKVCAV…QAAALIEELL (76 aa)). An O-(pantetheine 4'-phosphoryl)serine modification is found at S91.

The protein belongs to the acyl carrier protein (ACP) family. 4'-phosphopantetheine is transferred from CoA to a specific serine of apo-ACP by acpS. This modification is essential for activity because fatty acids are bound in thioester linkage to the sulfhydryl of the prosthetic group.

Its subcellular location is the plastid. The protein localises to the chloroplast. Functionally, carrier of the growing fatty acid chain in fatty acid biosynthesis. The chain is Acyl carrier protein 2, chloroplastic (ACP2) from Arabidopsis thaliana (Mouse-ear cress).